Consider the following 366-residue polypeptide: Transaldolase (366 aa).

K140 acts as the Schiff-base intermediate with substrate in catalysis.

Belongs to the transaldolase family. Type 2 subfamily.

The protein localises to the cytoplasm. It carries out the reaction D-sedoheptulose 7-phosphate + D-glyceraldehyde 3-phosphate = D-erythrose 4-phosphate + beta-D-fructose 6-phosphate. Its pathway is carbohydrate degradation; pentose phosphate pathway; D-glyceraldehyde 3-phosphate and beta-D-fructose 6-phosphate from D-ribose 5-phosphate and D-xylulose 5-phosphate (non-oxidative stage): step 2/3. Transaldolase is important for the balance of metabolites in the pentose-phosphate pathway. This is Transaldolase from Saccharopolyspora erythraea (strain ATCC 11635 / DSM 40517 / JCM 4748 / NBRC 13426 / NCIMB 8594 / NRRL 2338).